Here is a 488-residue protein sequence, read N- to C-terminus: Serine/threonine-protein kinase haspin homolog hrk1 (488 aa).

Positions 156–488 (TFEIQKIGEA…SLLNWVRQKY (333 aa)) constitute a Protein kinase domain. ATP is bound by residues 162-170 (IGEASYSEV) and lysine 184. Aspartate 305 functions as the Proton acceptor in the catalytic mechanism.

The protein belongs to the protein kinase superfamily. Ser/Thr protein kinase family. Haspin subfamily. Interacts with pds5 and swi6.

It is found in the cytoplasm. The protein resides in the chromosome. It carries out the reaction L-seryl-[protein] + ATP = O-phospho-L-seryl-[protein] + ADP + H(+). It catalyses the reaction L-threonyl-[protein] + ATP = O-phospho-L-threonyl-[protein] + ADP + H(+). Serine/threonine haspin-like protein kinase involved in cell cycle regulation. Acts in chromosomal passenger complex (CPC) targeting to centromeres by phosphorylating histone H3 at 'Thr3' (H3T3ph). The polypeptide is Serine/threonine-protein kinase haspin homolog hrk1 (hrk1) (Schizosaccharomyces pombe (strain 972 / ATCC 24843) (Fission yeast)).